Here is a 332-residue protein sequence, read N- to C-terminus: Probable isoaspartyl peptidase/L-asparaginase CG7860 (332 aa).

Threonine 188 functions as the Nucleophile in the catalytic mechanism. Residues 216–219 (RIGD) and 239–242 (TGHG) each bind substrate.

Belongs to the Ntn-hydrolase family. In terms of assembly, heterodimer of an alpha and beta chain produced by autocleavage. In terms of processing, cleaved into an alpha and beta chain by autocatalysis; this activates the enzyme. The N-terminal residue of the beta subunit is responsible for the nucleophile hydrolase activity.

It catalyses the reaction L-asparagine + H2O = L-aspartate + NH4(+). The catalysed reaction is Cleavage of a beta-linked Asp residue from the N-terminus of a polypeptide.. In terms of biological role, has both L-asparaginase and beta-aspartyl peptidase activity. Does not have aspartylglucosaminidase activity and is inactive toward GlcNAc-L-Asn. Likewise, has no activity toward glutamine. The sequence is that of Probable isoaspartyl peptidase/L-asparaginase CG7860 from Drosophila melanogaster (Fruit fly).